We begin with the raw amino-acid sequence, 227 residues long: Pre-hexon-linking protein VIII (227 aa).

Thr-64 is subject to Phosphothreonine; by host. The propeptide occupies 112 to 157 (FRHRVRSPGQGITHLKIRGRGIQLNDESVSSSLGLRPDGTFQIGGA). 2 positions are modified to phosphoserine; by host: Ser-118 and Ser-174.

It belongs to the adenoviridae hexon-linking protein family. In terms of assembly, interacts with the peripentonal hexons as well as the hexons in the facets. Part of a complex composed of the core-capsid bridging protein, the endosome lysis protein VI and the hexon-linking protein VIII; these interactions bridge the virus core to the capsid. Cleaved by the viral protease during virion maturation. May cause the middle segment to be shed from the capsid.

It is found in the virion. Its subcellular location is the host nucleus. Structural component of the virion that acts as a cement protein on the capsid interior and which glue the peripentonal hexons and group-of-nine hexons together. The chain is Pre-hexon-linking protein VIII from Homo sapiens (Human).